The following is a 147-amino-acid chain: Hemoglobin subunit delta (147 aa).

One can recognise a Globin domain in the interval 3 to 147 (NLTAAEKTQV…VANALAHKYH (145 aa)). Residues H64 and H93 each contribute to the heme b site.

The protein belongs to the globin family. Heterotetramer of two delta chains and two alpha chains. In terms of tissue distribution, red blood cells.

The chain is Hemoglobin subunit delta (HBD) from Elephas maximus (Indian elephant).